The primary structure comprises 320 residues: Mitochondrial fission regulator 1-like-B (320 aa).

A disordered region spans residues 1 to 37; the sequence is MASLGAAAEPERSLFGKDGAEACESPEGRRSGRRKRT. Over residues 9 to 30 the composition is skewed to basic and acidic residues; that stretch reads EPERSLFGKDGAEACESPEGRR.

Belongs to the MTFR1 family.

The protein resides in the mitochondrion outer membrane. Its function is as follows. Mitochondrial protein required for adaptation of miochondrial dynamics to metabolic changes. Regulates mitochondrial morphology at steady state and mediates AMPK-dependent stress-induced mitochondrial fragmentation via the control of OPA1 levels. This chain is Mitochondrial fission regulator 1-like-B (mtfr1l-b), found in Xenopus laevis (African clawed frog).